The following is a 457-amino-acid chain: Siroheme synthase (457 aa).

The segment at 1 to 204 (MDHLPIFCQL…NDQKAITETT (204 aa)) is precorrin-2 dehydrogenase /sirohydrochlorin ferrochelatase. Residues 22–23 (DV) and 43–44 (LA) contribute to the NAD(+) site. S128 carries the phosphoserine modification. The uroporphyrinogen-III C-methyltransferase stretch occupies residues 216–457 (GEVVLVGAGP…RDKLNWFSNH (242 aa)). P225 lines the S-adenosyl-L-methionine pocket. The active-site Proton acceptor is D248. K270 (proton donor) is an active-site residue. Residues 301–303 (GGD), I306, 331–332 (TA), M382, and G411 contribute to the S-adenosyl-L-methionine site.

This sequence in the N-terminal section; belongs to the precorrin-2 dehydrogenase / sirohydrochlorin ferrochelatase family. It in the C-terminal section; belongs to the precorrin methyltransferase family.

It catalyses the reaction uroporphyrinogen III + 2 S-adenosyl-L-methionine = precorrin-2 + 2 S-adenosyl-L-homocysteine + H(+). The catalysed reaction is precorrin-2 + NAD(+) = sirohydrochlorin + NADH + 2 H(+). It carries out the reaction siroheme + 2 H(+) = sirohydrochlorin + Fe(2+). The protein operates within cofactor biosynthesis; adenosylcobalamin biosynthesis; precorrin-2 from uroporphyrinogen III: step 1/1. It functions in the pathway cofactor biosynthesis; adenosylcobalamin biosynthesis; sirohydrochlorin from precorrin-2: step 1/1. It participates in porphyrin-containing compound metabolism; siroheme biosynthesis; precorrin-2 from uroporphyrinogen III: step 1/1. Its pathway is porphyrin-containing compound metabolism; siroheme biosynthesis; siroheme from sirohydrochlorin: step 1/1. The protein operates within porphyrin-containing compound metabolism; siroheme biosynthesis; sirohydrochlorin from precorrin-2: step 1/1. In terms of biological role, multifunctional enzyme that catalyzes the SAM-dependent methylations of uroporphyrinogen III at position C-2 and C-7 to form precorrin-2 via precorrin-1. Then it catalyzes the NAD-dependent ring dehydrogenation of precorrin-2 to yield sirohydrochlorin. Finally, it catalyzes the ferrochelation of sirohydrochlorin to yield siroheme. This is Siroheme synthase from Escherichia coli O81 (strain ED1a).